Here is a 210-residue protein sequence, read N- to C-terminus: Imidazole glycerol phosphate synthase subunit HisH (210 aa).

In terms of domain architecture, Glutamine amidotransferase type-1 spans Lys7–Met210. The active-site Nucleophile is Cys82. Residues His192 and Glu194 contribute to the active site.

In terms of assembly, heterodimer of HisH and HisF.

It localises to the cytoplasm. The enzyme catalyses 5-[(5-phospho-1-deoxy-D-ribulos-1-ylimino)methylamino]-1-(5-phospho-beta-D-ribosyl)imidazole-4-carboxamide + L-glutamine = D-erythro-1-(imidazol-4-yl)glycerol 3-phosphate + 5-amino-1-(5-phospho-beta-D-ribosyl)imidazole-4-carboxamide + L-glutamate + H(+). It catalyses the reaction L-glutamine + H2O = L-glutamate + NH4(+). It functions in the pathway amino-acid biosynthesis; L-histidine biosynthesis; L-histidine from 5-phospho-alpha-D-ribose 1-diphosphate: step 5/9. Its function is as follows. IGPS catalyzes the conversion of PRFAR and glutamine to IGP, AICAR and glutamate. The HisH subunit catalyzes the hydrolysis of glutamine to glutamate and ammonia as part of the synthesis of IGP and AICAR. The resulting ammonia molecule is channeled to the active site of HisF. The chain is Imidazole glycerol phosphate synthase subunit HisH from Photobacterium profundum (strain SS9).